The chain runs to 1188 residues: DNA-directed RNA polymerase subunit beta (1188 aa).

This sequence belongs to the RNA polymerase beta chain family. As to quaternary structure, the RNAP catalytic core consists of 2 alpha, 1 beta, 1 beta' and 1 omega subunit. When a sigma factor is associated with the core the holoenzyme is formed, which can initiate transcription.

It carries out the reaction RNA(n) + a ribonucleoside 5'-triphosphate = RNA(n+1) + diphosphate. Its function is as follows. DNA-dependent RNA polymerase catalyzes the transcription of DNA into RNA using the four ribonucleoside triphosphates as substrates. The polypeptide is DNA-directed RNA polymerase subunit beta (Streptococcus sanguinis (strain SK36)).